The primary structure comprises 57 residues: MSRLYAIILIALVFNVIMTIMPDMKVEAVSCEDCPPHCATKDQRAKCENDKCVCEPK.

The first 28 residues, 1–28 (MSRLYAIILIALVFNVIMTIMPDMKVEA), serve as a signal peptide directing secretion. Intrachain disulfides connect Cys-31-Cys-47, Cys-34-Cys-52, and Cys-38-Cys-54.

In terms of tissue distribution, expressed by the venom gland.

The protein localises to the secreted. Functionally, inhibits voltage-gated potassium channel rKv1.1/KCNA1 at nanomolar ranges (IC(50)=8.5 nM). The sequence is that of Potassium channel toxin alpha-KTx 8.7 from Mesobuthus eupeus (Lesser Asian scorpion).